A 417-amino-acid chain; its full sequence is Serine hydroxymethyltransferase (417 aa).

(6S)-5,6,7,8-tetrahydrofolate-binding positions include L121 and 125–127; that span reads GHL. K230 is subject to N6-(pyridoxal phosphate)lysine. Position 355 to 357 (355 to 357) interacts with (6S)-5,6,7,8-tetrahydrofolate; that stretch reads SPF.

Belongs to the SHMT family. As to quaternary structure, homodimer. Pyridoxal 5'-phosphate serves as cofactor.

Its subcellular location is the cytoplasm. The enzyme catalyses (6R)-5,10-methylene-5,6,7,8-tetrahydrofolate + glycine + H2O = (6S)-5,6,7,8-tetrahydrofolate + L-serine. Its pathway is one-carbon metabolism; tetrahydrofolate interconversion. The protein operates within amino-acid biosynthesis; glycine biosynthesis; glycine from L-serine: step 1/1. Its function is as follows. Catalyzes the reversible interconversion of serine and glycine with tetrahydrofolate (THF) serving as the one-carbon carrier. This reaction serves as the major source of one-carbon groups required for the biosynthesis of purines, thymidylate, methionine, and other important biomolecules. Also exhibits THF-independent aldolase activity toward beta-hydroxyamino acids, producing glycine and aldehydes, via a retro-aldol mechanism. This chain is Serine hydroxymethyltransferase, found in Nitrosococcus oceani (strain ATCC 19707 / BCRC 17464 / JCM 30415 / NCIMB 11848 / C-107).